A 299-amino-acid chain; its full sequence is Small ribosomal subunit biogenesis GTPase RsgA (299 aa).

The CP-type G domain occupies 73–232; it reads CSWLTRPQVA…VADTPGFNRP (160 aa). Residues 122–125 and 174–182 contribute to the GTP site; these read TKGD and GPSGVGKSS. Cys257, Cys262, His264, and Cys270 together coordinate Zn(2+).

Belongs to the TRAFAC class YlqF/YawG GTPase family. RsgA subfamily. Monomer. Associates with 30S ribosomal subunit, binds 16S rRNA. Zn(2+) serves as cofactor.

It localises to the cytoplasm. One of several proteins that assist in the late maturation steps of the functional core of the 30S ribosomal subunit. Helps release RbfA from mature subunits. May play a role in the assembly of ribosomal proteins into the subunit. Circularly permuted GTPase that catalyzes slow GTP hydrolysis, GTPase activity is stimulated by the 30S ribosomal subunit. The polypeptide is Small ribosomal subunit biogenesis GTPase RsgA (Parasynechococcus marenigrum (strain WH8102)).